The primary structure comprises 754 residues: MKNSIISYPRIGANRELKFAIEKYFKNQSSKEELLKSAKDLRIRHWQEIQKAGIDFIPSNDFSLYDNVLDAAVLFNIVHTKYKNLNLDALDEYFAQSRGYQGENGDVTALAMKKWFNTNYHYLVPECDNADIIALTGDKIFKEYLEAKELGIESKPVLIGIFTLFKLIAFKDEKTQKLAKEKLLNAYIELFDKLNELKVTWLELDEPYLVYDLSKEDIALFEEFYQELLNHKKDLKILLQSYFGDLRDIYPKLLESKFDALGLDFIEGKQSLALVQKYGFAKDKILFAGLINGKNIYTNDYAKSLKLIKELQKYTQNIILNTSCSLLHVPYSTEFESKLDSNYLKLFSFAKEKLQELKDLKEILNSSEENPLFRANQELFKNIPERLDEKVKARLKALKKEDFTRTPSFKERALIQKEFLKLPLLPTTTIGSFPQSADVRSNRLAFKQEKISAQNYTEFNQQKIKECIQIQEEIGLDVLVHGEFERNDMVEYFGENLKGFLFTQNGWVQSYGTRCVKPPVIWGDVSRTKPITLAWSKFAQSLSQKIVKGMLTGPVTILNWSFPREDISLKESTEQIALAIRDEVLDLENAGIKIIQIDEAALREKLPLRKSDWHSEYLDWAIPAFNLVHSGVKAKTQIHTHMCYSEFSDILKEIDAMDADVISFEASRSNLSLLDTLKAIRFKTEVGPGVYDIHSPRVPSVEELSLTIEKILNKLPKEQIWINPDCGLKTRAYEEVIASLKNLVTATQKIREQL.

Residues 15–18 (RELK) and Lys114 contribute to the 5-methyltetrahydropteroyltri-L-glutamate site. L-homocysteine contacts are provided by residues 430–432 (IGS) and Glu483. Residues 430 to 432 (IGS) and Glu483 each bind L-methionine. Residues 514 to 515 (RC) and Trp560 contribute to the 5-methyltetrahydropteroyltri-L-glutamate site. Asp598 is an L-homocysteine binding site. Asp598 is an L-methionine binding site. Glu604 contributes to the 5-methyltetrahydropteroyltri-L-glutamate binding site. Residues His641, Cys643, and Glu665 each coordinate Zn(2+). Residue His694 is the Proton donor of the active site. Cys726 contributes to the Zn(2+) binding site.

This sequence belongs to the vitamin-B12 independent methionine synthase family. It depends on Zn(2+) as a cofactor.

It catalyses the reaction 5-methyltetrahydropteroyltri-L-glutamate + L-homocysteine = tetrahydropteroyltri-L-glutamate + L-methionine. The protein operates within amino-acid biosynthesis; L-methionine biosynthesis via de novo pathway; L-methionine from L-homocysteine (MetE route): step 1/1. Functionally, catalyzes the transfer of a methyl group from 5-methyltetrahydrofolate to homocysteine resulting in methionine formation. In Campylobacter jejuni (strain RM1221), this protein is 5-methyltetrahydropteroyltriglutamate--homocysteine methyltransferase.